A 508-amino-acid polypeptide reads, in one-letter code: NADH-quinone oxidoreductase subunit N 2 (508 aa).

Helical transmembrane passes span Ser-14 to Leu-34, Ser-43 to Ala-63, Phe-90 to Ala-110, Gly-119 to Val-139, Leu-144 to Ile-164, Phe-179 to Val-199, Gly-223 to Phe-243, Gly-275 to Thr-295, Trp-298 to Leu-318, Met-327 to Leu-347, Ile-353 to Val-373, Ala-400 to Leu-420, Gly-433 to Val-455, and Thr-473 to Ala-493.

It belongs to the complex I subunit 2 family. NDH-1 is composed of 14 different subunits. Subunits NuoA, H, J, K, L, M, N constitute the membrane sector of the complex.

It is found in the cell membrane. It catalyses the reaction a quinone + NADH + 5 H(+)(in) = a quinol + NAD(+) + 4 H(+)(out). NDH-1 shuttles electrons from NADH, via FMN and iron-sulfur (Fe-S) centers, to quinones in the respiratory chain. The immediate electron acceptor for the enzyme in this species is believed to be a menaquinone. Couples the redox reaction to proton translocation (for every two electrons transferred, four hydrogen ions are translocated across the cytoplasmic membrane), and thus conserves the redox energy in a proton gradient. In Symbiobacterium thermophilum (strain DSM 24528 / JCM 14929 / IAM 14863 / T), this protein is NADH-quinone oxidoreductase subunit N 2.